A 249-amino-acid polypeptide reads, in one-letter code: Demethylmenaquinone methyltransferase (249 aa).

S-adenosyl-L-methionine contacts are provided by residues threonine 67, aspartate 87, and 115–116; that span reads DA.

This sequence belongs to the class I-like SAM-binding methyltransferase superfamily. MenG/UbiE family.

It catalyses the reaction a 2-demethylmenaquinol + S-adenosyl-L-methionine = a menaquinol + S-adenosyl-L-homocysteine + H(+). Its pathway is quinol/quinone metabolism; menaquinone biosynthesis; menaquinol from 1,4-dihydroxy-2-naphthoate: step 2/2. In terms of biological role, methyltransferase required for the conversion of demethylmenaquinol (DMKH2) to menaquinol (MKH2). In Leptospira interrogans serogroup Icterohaemorrhagiae serovar copenhageni (strain Fiocruz L1-130), this protein is Demethylmenaquinone methyltransferase.